The chain runs to 310 residues: N-acetyl-gamma-glutamyl-phosphate reductase (310 aa).

Residue Cys-116 is part of the active site.

It belongs to the NAGSA dehydrogenase family. Type 2 subfamily.

It is found in the cytoplasm. The catalysed reaction is N-acetyl-L-glutamate 5-semialdehyde + phosphate + NADP(+) = N-acetyl-L-glutamyl 5-phosphate + NADPH + H(+). The protein operates within amino-acid biosynthesis; L-arginine biosynthesis; N(2)-acetyl-L-ornithine from L-glutamate: step 3/4. Catalyzes the NADPH-dependent reduction of N-acetyl-5-glutamyl phosphate to yield N-acetyl-L-glutamate 5-semialdehyde. This is N-acetyl-gamma-glutamyl-phosphate reductase from Chelativorans sp. (strain BNC1).